The chain runs to 273 residues: Putative phosphoenolpyruvate synthase regulatory protein (273 aa).

Position 153–160 (153–160 (AVSRAGKT)) interacts with ADP.

This sequence belongs to the pyruvate, phosphate/water dikinase regulatory protein family. PSRP subfamily.

The enzyme catalyses [pyruvate, water dikinase] + ADP = [pyruvate, water dikinase]-phosphate + AMP + H(+). It carries out the reaction [pyruvate, water dikinase]-phosphate + phosphate + H(+) = [pyruvate, water dikinase] + diphosphate. In terms of biological role, bifunctional serine/threonine kinase and phosphorylase involved in the regulation of the phosphoenolpyruvate synthase (PEPS) by catalyzing its phosphorylation/dephosphorylation. This Xylella fastidiosa (strain M12) protein is Putative phosphoenolpyruvate synthase regulatory protein.